The chain runs to 358 residues: DNA integrity scanning protein DisA (358 aa).

One can recognise a DAC domain in the interval 6 to 144 (RPTLREAVAR…RGERHVLTDS (139 aa)). ATP-binding positions include glycine 73, leucine 91, and 104–108 (TRHRS).

It belongs to the DisA family. Homooctamer. Requires Mg(2+) as cofactor.

It carries out the reaction 2 ATP = 3',3'-c-di-AMP + 2 diphosphate. Participates in a DNA-damage check-point. DisA forms globular foci that rapidly scan along the chromosomes searching for lesions. In terms of biological role, also has diadenylate cyclase activity, catalyzing the condensation of 2 ATP molecules into cyclic di-AMP (c-di-AMP). c-di-AMP likely acts as a signaling molecule that may couple DNA integrity with a cellular process. This is DNA integrity scanning protein DisA from Mycobacterium bovis (strain ATCC BAA-935 / AF2122/97).